The primary structure comprises 175 residues: NADH-quinone oxidoreductase subunit B (175 aa).

[4Fe-4S] cluster contacts are provided by Cys-49, Cys-50, Cys-115, and Cys-145.

Belongs to the complex I 20 kDa subunit family. As to quaternary structure, NDH-1 is composed of 14 different subunits. Subunits NuoB, C, D, E, F, and G constitute the peripheral sector of the complex. The cofactor is [4Fe-4S] cluster.

It localises to the cell membrane. The enzyme catalyses a quinone + NADH + 5 H(+)(in) = a quinol + NAD(+) + 4 H(+)(out). NDH-1 shuttles electrons from NADH, via FMN and iron-sulfur (Fe-S) centers, to quinones in the respiratory chain. The immediate electron acceptor for the enzyme in this species is believed to be a menaquinone. Couples the redox reaction to proton translocation (for every two electrons transferred, four hydrogen ions are translocated across the cytoplasmic membrane), and thus conserves the redox energy in a proton gradient. The sequence is that of NADH-quinone oxidoreductase subunit B from Heliobacterium modesticaldum (strain ATCC 51547 / Ice1).